The chain runs to 200 residues: dTTP/UTP pyrophosphatase (200 aa).

The active-site Proton acceptor is the Asp-76.

The protein belongs to the Maf family. YhdE subfamily. A divalent metal cation is required as a cofactor.

It is found in the cytoplasm. The enzyme catalyses dTTP + H2O = dTMP + diphosphate + H(+). The catalysed reaction is UTP + H2O = UMP + diphosphate + H(+). In terms of biological role, nucleoside triphosphate pyrophosphatase that hydrolyzes dTTP and UTP. May have a dual role in cell division arrest and in preventing the incorporation of modified nucleotides into cellular nucleic acids. This is dTTP/UTP pyrophosphatase from Acetivibrio thermocellus (strain ATCC 27405 / DSM 1237 / JCM 9322 / NBRC 103400 / NCIMB 10682 / NRRL B-4536 / VPI 7372) (Clostridium thermocellum).